Here is a 317-residue protein sequence, read N- to C-terminus: L-lactate dehydrogenase (317 aa).

Residues V16, D37, and Y68 each contribute to the NAD(+) site. Substrate is bound by residues Q85, R91, N123–D126, and D151–R154. A121 to N123 lines the NAD(+) pocket. H178 serves as the catalytic Proton acceptor. A Phosphotyrosine modification is found at Y222. T231 is a substrate binding site.

Belongs to the LDH/MDH superfamily. LDH family. Homotetramer.

Its subcellular location is the cytoplasm. It catalyses the reaction (S)-lactate + NAD(+) = pyruvate + NADH + H(+). It participates in fermentation; pyruvate fermentation to lactate; (S)-lactate from pyruvate: step 1/1. Functionally, catalyzes the conversion of lactate to pyruvate. The chain is L-lactate dehydrogenase from Mesoplasma florum (strain ATCC 33453 / NBRC 100688 / NCTC 11704 / L1) (Acholeplasma florum).